The following is a 250-amino-acid chain: MTDILIDNTATETVRTLIRAFPLVPVSQPPEQGSYLLAEHDTVSLRLVGEKSSVIVDFASGAAQYRRTKGGGELIAKAVNHTAHPTVWDATAGLGRDSFVLASLGLAVTAFEQHPAVACLLSDGIRRALLNPETQDTAAHINLHFGNAAEQMPALVQTQGKPDIVYLDPMYPERRKSAAVKKEMTYFHRLVGEAQDEAALLHTARQTAKKRVVVKRPRLGEHLAGQAPAYQYTGKSTRFDVYLPYGTDKG.

S-adenosyl-L-methionine contacts are provided by residues 96–97 and D168; that span reads RD.

The protein belongs to the methyltransferase superfamily. RsmJ family.

The protein resides in the cytoplasm. The catalysed reaction is guanosine(1516) in 16S rRNA + S-adenosyl-L-methionine = N(2)-methylguanosine(1516) in 16S rRNA + S-adenosyl-L-homocysteine + H(+). In terms of biological role, specifically methylates the guanosine in position 1516 of 16S rRNA. This chain is Ribosomal RNA small subunit methyltransferase J, found in Neisseria meningitidis serogroup C (strain 053442).